The following is a 193-amino-acid chain: NADH-quinone oxidoreductase subunit B (193 aa).

Cys-72, Cys-73, Cys-137, and Cys-167 together coordinate [4Fe-4S] cluster.

Belongs to the complex I 20 kDa subunit family. In terms of assembly, NDH-1 is composed of 14 different subunits. Subunits NuoB, C, D, E, F, and G constitute the peripheral sector of the complex. The cofactor is [4Fe-4S] cluster.

The protein resides in the cell inner membrane. It carries out the reaction a quinone + NADH + 5 H(+)(in) = a quinol + NAD(+) + 4 H(+)(out). In terms of biological role, NDH-1 shuttles electrons from NADH, via FMN and iron-sulfur (Fe-S) centers, to quinones in the respiratory chain. The immediate electron acceptor for the enzyme in this species is believed to be ubiquinone. Couples the redox reaction to proton translocation (for every two electrons transferred, four hydrogen ions are translocated across the cytoplasmic membrane), and thus conserves the redox energy in a proton gradient. In Bartonella quintana (strain Toulouse) (Rochalimaea quintana), this protein is NADH-quinone oxidoreductase subunit B.